The sequence spans 931 residues: Glycine dehydrogenase (decarboxylating) (931 aa).

N6-(pyridoxal phosphate)lysine is present on lysine 684.

This sequence belongs to the GcvP family. As to quaternary structure, the glycine cleavage system is composed of four proteins: P, T, L and H. It depends on pyridoxal 5'-phosphate as a cofactor.

The catalysed reaction is N(6)-[(R)-lipoyl]-L-lysyl-[glycine-cleavage complex H protein] + glycine + H(+) = N(6)-[(R)-S(8)-aminomethyldihydrolipoyl]-L-lysyl-[glycine-cleavage complex H protein] + CO2. The glycine cleavage system catalyzes the degradation of glycine. The P protein binds the alpha-amino group of glycine through its pyridoxal phosphate cofactor; CO(2) is released and the remaining methylamine moiety is then transferred to the lipoamide cofactor of the H protein. In Bartonella henselae (strain ATCC 49882 / DSM 28221 / CCUG 30454 / Houston 1) (Rochalimaea henselae), this protein is Glycine dehydrogenase (decarboxylating).